The primary structure comprises 192 residues: uncharacterized protein (192 aa).

A Nudix hydrolase domain is found at 29–160 (QRQAAVLVPV…PLDIHRRGNH (132 aa)). Residues 67–89 (GAVDDTDASLIAAALREAQEEVA) carry the Nudix box motif. Mg(2+)-binding residues include Glu-83 and Glu-87.

It belongs to the Nudix hydrolase family. PCD1 subfamily. The cofactor is Mn(2+). Mg(2+) is required as a cofactor.

Its function is as follows. Probably mediates the hydrolysis of some nucleoside diphosphate derivatives. This is an uncharacterized protein from Cronobacter sakazakii (strain ATCC BAA-894) (Enterobacter sakazakii).